A 422-amino-acid polypeptide reads, in one-letter code: Target of rapamycin complex 2 subunit bit61 (422 aa).

Residues 48–69 show a composition bias toward polar residues; it reads VTTKESNVGDSDTTENIKSPFN. Residues 48–101 form a disordered region; that stretch reads VTTKESNVGDSDTTENIKSPFNGQWPFSRRSSQSSSHPVFEETHWSKHSKRPGK. Phosphoserine occurs at positions 109, 132, and 201.

It belongs to the BIT61 family. The target of rapamycin complex 2 (TORC2) is composed of at least bit61, pop3/wat1, sin1, ste20 and tor1. Post-translationally, either Thr-23, Thr-25 or Ser-26 and Ser-78 or Ser-79 are phosphorylated as well.

Its subcellular location is the cytoplasm. It is found in the nucleus. Its function is as follows. Component of TORC2, which regulates multiple cellular processes to control cell growth in response to environmental signals. TORC2 is required for cell survival under various stress conditions. TORC2 positively controls G1 cell-cycle arrest, sexual development and amino acid uptake. Positively regulates amino acid uptake through the control of expression of amino acid permeases. In Schizosaccharomyces pombe (strain 972 / ATCC 24843) (Fission yeast), this protein is Target of rapamycin complex 2 subunit bit61.